A 168-amino-acid chain; its full sequence is Sperm acrosome-associated protein 9 (168 aa).

Microtubule inner protein component of sperm flagellar doublet microtubules. Interacts with CABP1 and CALR. Interacts with INCA1. Interacts with microtubules. As to expression, testis-specific. Expressed in round spermatids.

The protein localises to the cytoplasm. It is found in the cytoplasmic vesicle. It localises to the secretory vesicle. Its subcellular location is the acrosome. The protein resides in the cytoskeleton. The protein localises to the cilium basal body. It is found in the flagellum axoneme. It localises to the cilium axoneme. Its subcellular location is the nucleus. Microtubule inner protein (MIP) part of the dynein-decorated doublet microtubules (DMTs) of multiciliated respiratory cells and the distal singlet microtubules of monoflagellated spermatozoa. Forms an extensive interaction network cross-linking the lumen of axonemal doublet microtubules. In Rattus norvegicus (Rat), this protein is Sperm acrosome-associated protein 9 (Spaca9).